A 399-amino-acid chain; its full sequence is CCA-adding enzyme (399 aa).

ATP-binding residues include G28 and R31. Residues G28 and R31 each contribute to the CTP site. Positions 41 and 43 each coordinate Mg(2+). ATP contacts are provided by R112, D155, R158, R161, and R164. 5 residues coordinate CTP: R112, D155, R158, R161, and R164.

This sequence belongs to the tRNA nucleotidyltransferase/poly(A) polymerase family. Bacterial CCA-adding enzyme type 3 subfamily. Homodimer. Mg(2+) is required as a cofactor.

The catalysed reaction is a tRNA precursor + 2 CTP + ATP = a tRNA with a 3' CCA end + 3 diphosphate. It catalyses the reaction a tRNA with a 3' CCA end + 2 CTP + ATP = a tRNA with a 3' CCACCA end + 3 diphosphate. Its function is as follows. Catalyzes the addition and repair of the essential 3'-terminal CCA sequence in tRNAs without using a nucleic acid template. Adds these three nucleotides in the order of C, C, and A to the tRNA nucleotide-73, using CTP and ATP as substrates and producing inorganic pyrophosphate. tRNA 3'-terminal CCA addition is required both for tRNA processing and repair. Also involved in tRNA surveillance by mediating tandem CCA addition to generate a CCACCA at the 3' terminus of unstable tRNAs. While stable tRNAs receive only 3'-terminal CCA, unstable tRNAs are marked with CCACCA and rapidly degraded. The protein is CCA-adding enzyme of Staphylococcus saprophyticus subsp. saprophyticus (strain ATCC 15305 / DSM 20229 / NCIMB 8711 / NCTC 7292 / S-41).